Consider the following 556-residue polypeptide: Polypyrimidine tract-binding protein 1 (556 aa).

At methionine 1 the chain carries N-acetylmethionine. Phosphoserine is present on serine 16. The segment at 35–54 is disordered; that stretch reads ASAANGNDSKKFKGDNRSTG. 3 consecutive RRM domains span residues 58 to 142, 183 to 259, and 362 to 436; these read RVIH…SSPN, LRII…FSKL, and SVLL…LSKH. A Glycyl lysine isopeptide (Lys-Gly) (interchain with G-Cter in SUMO2) cross-link involves residue lysine 64. Residue tyrosine 126 is modified to Phosphotyrosine. Residue threonine 137 is modified to Phosphothreonine. The residue at position 140 (serine 140) is a Phosphoserine. Lysine 217 participates in a covalent cross-link: Glycyl lysine isopeptide (Lys-Gly) (interchain with G-Cter in SUMO2). The disordered stretch occupies residues 436–458; that stretch reads HQSVQLPREGQEDQGLTKDYGSS. Serine 458 carries the phosphoserine modification. The region spanning 479–554 is the RRM 4 domain; it reads ATLHLSNIPP…HHLRVSFSKS (76 aa).

As to quaternary structure, monomer. Part of a ternary complex containing KHSRP, PTBP1, PTBP2 and HNRPH1. Interacts with RAVER1 and SFPQ.

The protein localises to the nucleus. Functionally, plays a role in pre-mRNA splicing and in the regulation of alternative splicing events. Activates exon skipping of its own pre-mRNA during muscle cell differentiation. Binds to the polypyrimidine tract of introns. May promote RNA looping when bound to two separate polypyrimidine tracts in the same pre-mRNA. May promote the binding of U2 snRNP to pre-mRNA. Cooperates with RAVER1 to modulate switching between mutually exclusive exons during maturation of the TPM1 pre-mRNA. Represses the splicing of MAPT/Tau exon 10. Binds to polypyrimidine-rich controlling element (PCE) of CFTR and promotes exon skipping of CFTR exon 9, thereby antagonizing TIA1 and its role in exon inclusion of CFTR exon 9. Plays a role in the splicing of pyruvate kinase PKM by binding repressively to a polypyrimidine tract flanking PKM exon 9, inhibiting exon 9 inclusion and resulting in exon 10 inclusion and production of the PKM M2 isoform. The protein is Polypyrimidine tract-binding protein 1 (Ptbp1) of Rattus norvegicus (Rat).